The following is a 40-amino-acid chain: Submaxillary gland androgen-regulated protein 2, isoform epsilon (40 aa).

A signal peptide spans 1-20 (MKALYMVFVLWVLIGCFLRC).

The protein localises to the secreted. Its function is as follows. May play a role in protection or detoxification. This chain is Submaxillary gland androgen-regulated protein 2, isoform epsilon (Smr2), found in Mus musculus (Mouse).